We begin with the raw amino-acid sequence, 1083 residues long: MRFAATVSEKQSEQSVEVTEEFAVTMTEKRSCVHFDKYVDLDKLLKIIKSYQQIKCGECNERVHVKRGSRWGASNRRDWYSSSDQNCARNAIWLCLECGYYVCGDVGLPTEAQSHVMGHNRLTRHRLVIQCKNPQLRWCFSCQSLLPFDNEENGEKKDLLLEVVKLIRERSPNTYSASFETEFSCSGSIYGGIEARDGYAVRGLVNLGNTCFFNSVMQNLLSLDQLREHFLKEDLSVSGPLVSSLKELFAESNSEASVFRNEINPRDLFFSVCSQAPQFRGYQQHDSHELLRCLLDGLSIEESSLRKKLGVSDSNDSSTYQKPTLIDSVFGGEISSTVSCLECGHFSKVYEPFMDLSLPVPSMKLPPKKQQILSQAKEVLKNGAVSKDSEVVSAKPASDHNSTVPLFPSDHKIQSRPETSDNETDLVLLSDVSDTAPSTEAKGVNQILVGSTETLMHDNDRTGKTVPDKEDVRATQSNEETSASGISAVIDEAQVCGCPDLEQSSSSANQGADEELALMVADSQVLYMPYKDHLFYDDYMVAEASSSFVSGDHEPKKDYFDFSSFLDEPEIREGPVFRPLSKSEVYEAGFKADCSDDKTVSAGKGEASSSFISSDHEQNIDYVDFSSFFDEPEISERPFFRPLSKSEVSEAGFKADCSDDKTVSAGKGEASSSFVSSDHEQNIDYVDFSSFFDEPEISERPFFRPLSKSEVSEAGFMAVSGNDKTVRAGKGETFSSFMSGDNERNIDYVEFTNRIFDDRGTSERPVFGPPSKAKVSEAGFVAVSSDSDPAVLDESDSPVSVDRCLAQFTKHEILSEDNAWHCENCSKNLKLQRLREKRRTKEGLSNRWVNENGASSAFDECRDSSLNQSCIDLENGYKAAPPITKLPNCKEEESAIDDGFVGEENTKQAPITSVTETPLLGGETISSQPASDNECENWEDLAVDSEEVIVKRDARKKVLINKAPPVLTIHLKRFSQDARGRVSKLSGHVDFQEFIDLSKYMDTRCSEEDEPVYRLAGLVEHLGAMSRGHYVSYIRGGHKERRDSDTKEPNSSIWYHASDSQVRPASLEEVLRSEAYILFYERI.

The UBP-type zinc finger occupies 30–165 (RSCVHFDKYV…KKDLLLEVVK (136 aa)). Zn(2+) is bound by residues Cys-32, His-34, Cys-56, Cys-59, Cys-95, Cys-98, Cys-103, His-115, His-119, His-125, Cys-139, and Cys-142. One can recognise a USP domain in the interval 202 to 1083 (RGLVNLGNTC…EAYILFYERI (882 aa)). Catalysis depends on Cys-211, which acts as the Nucleophile. Disordered regions lie at residues 387 to 424 (KDSE…DNET) and 450 to 486 (GSTE…ASGI). 2 stretches are compositionally biased toward basic and acidic residues: residues 409–419 (SDHKIQSRPET) and 455–473 (LMHD…EDVR). Positions 474 to 485 (ATQSNEETSASG) are enriched in polar residues. His-1029 (proton acceptor) is an active-site residue.

The protein belongs to the peptidase C19 family.

The catalysed reaction is Thiol-dependent hydrolysis of ester, thioester, amide, peptide and isopeptide bonds formed by the C-terminal Gly of ubiquitin (a 76-residue protein attached to proteins as an intracellular targeting signal).. Recognizes and hydrolyzes the peptide bond at the C-terminal Gly of ubiquitin. Involved in the processing of poly-ubiquitin precursors as well as that of ubiquitinated proteins. Is involved in resistance to the arginine analog canavanine (CAN). The protein is Ubiquitin carboxyl-terminal hydrolase 1 (UBP1) of Arabidopsis thaliana (Mouse-ear cress).